Reading from the N-terminus, the 519-residue chain is Acetylcholine receptor subunit gamma (519 aa).

A signal peptide spans Met1–Gly22. Over Arg23–Lys240 the chain is Extracellular. N-linked (GlcNAc...) asparagine glycosylation is found at Asn52 and Asn163. Cys150 and Cys164 form a disulfide bridge. 3 helical membrane-spanning segments follow: residues Pro241 to Leu265, Cys274 to Ala292, and Tyr308 to Val329. Residues Ser330–Arg476 are Cytoplasmic-facing. Residues Val477–Ala497 form a helical membrane-spanning segment.

This sequence belongs to the ligand-gated ion channel (TC 1.A.9) family. Acetylcholine receptor (TC 1.A.9.1) subfamily. Gamma/CHRNG sub-subfamily. As to quaternary structure, pentamer of two alpha chains, and one each of the beta, delta, and gamma (in immature muscle) or epsilon (in mature muscle) chains.

The protein resides in the postsynaptic cell membrane. It localises to the cell membrane. The catalysed reaction is K(+)(in) = K(+)(out). The enzyme catalyses Na(+)(in) = Na(+)(out). In terms of biological role, after binding acetylcholine, the AChR responds by an extensive change in conformation that affects all subunits and leads to opening of an ion-conducting channel across the plasma membrane. This chain is Acetylcholine receptor subunit gamma (CHRNG), found in Bos taurus (Bovine).